The following is a 199-amino-acid chain: Large ribosomal subunit protein bL9 (199 aa).

The disordered stretch occupies residues lysine 153–asparagine 199.

The protein belongs to the bacterial ribosomal protein bL9 family.

In terms of biological role, binds to the 23S rRNA. This chain is Large ribosomal subunit protein bL9, found in Treponema denticola (strain ATCC 35405 / DSM 14222 / CIP 103919 / JCM 8153 / KCTC 15104).